Here is a 324-residue protein sequence, read N- to C-terminus: 3'-5' exoribonuclease YhaM (324 aa).

The HD domain occupies 163–279 (HVVSMLELAK…LHYIDNLDAK (117 aa)).

The protein belongs to the YhaM family.

Functionally, shows a 3'-5' exoribonuclease activity. The protein is 3'-5' exoribonuclease YhaM of Geobacillus sp. (strain WCH70).